Reading from the N-terminus, the 534-residue chain is Peptide chain release factor 3 (534 aa).

One can recognise a tr-type G domain in the interval 9-278 (ARRRTFAIIS…FFVEHAPPPQ (270 aa)). Residues 18 to 25 (SHPDAGKT), 86 to 90 (DTPGH), and 140 to 143 (NKLD) each bind GTP.

This sequence belongs to the TRAFAC class translation factor GTPase superfamily. Classic translation factor GTPase family. PrfC subfamily.

The protein resides in the cytoplasm. Functionally, increases the formation of ribosomal termination complexes and stimulates activities of RF-1 and RF-2. It binds guanine nucleotides and has strong preference for UGA stop codons. It may interact directly with the ribosome. The stimulation of RF-1 and RF-2 is significantly reduced by GTP and GDP, but not by GMP. In Xanthomonas euvesicatoria pv. vesicatoria (strain 85-10) (Xanthomonas campestris pv. vesicatoria), this protein is Peptide chain release factor 3.